A 395-amino-acid polypeptide reads, in one-letter code: Elongation factor Tu (395 aa).

The region spanning 10 to 205 (KPHVNVGTIG…VDNDIPIPPR (196 aa)) is the tr-type G domain. The G1 stretch occupies residues 19-26 (GHVDHGKT). 19-26 (GHVDHGKT) contributes to the GTP binding site. Threonine 26 provides a ligand contact to Mg(2+). A G2 region spans residues 60-64 (GITIN). A G3 region spans residues 81–84 (DCPG). Residues 81–85 (DCPGH) and 136–139 (NKVD) contribute to the GTP site. The interval 136-139 (NKVD) is G4. A G5 region spans residues 174–176 (SAL).

Belongs to the TRAFAC class translation factor GTPase superfamily. Classic translation factor GTPase family. EF-Tu/EF-1A subfamily. In terms of assembly, monomer.

Its subcellular location is the cytoplasm. It catalyses the reaction GTP + H2O = GDP + phosphate + H(+). Its function is as follows. GTP hydrolase that promotes the GTP-dependent binding of aminoacyl-tRNA to the A-site of ribosomes during protein biosynthesis. In Cytophaga hutchinsonii (strain ATCC 33406 / DSM 1761 / CIP 103989 / NBRC 15051 / NCIMB 9469 / D465), this protein is Elongation factor Tu.